The chain runs to 136 residues: 1,4-dihydroxy-2-naphthoyl-CoA hydrolase (136 aa).

Glutamate 63 acts as the Nucleophile or proton acceptor in catalysis. Substrate-binding positions include glycine 82, 89 to 92, and 106 to 111; these read HVRS and HLGSRH.

The protein belongs to the thioesterase PaaI family. Homotetramer. Dimer of dimers.

It catalyses the reaction 1,4-dihydroxy-2-naphthoyl-CoA + H2O = 1,4-dihydroxy-2-naphthoate + CoA + H(+). Its pathway is quinol/quinone metabolism; 1,4-dihydroxy-2-naphthoate biosynthesis; 1,4-dihydroxy-2-naphthoate from chorismate: step 7/7. The protein operates within quinol/quinone metabolism; menaquinone biosynthesis. Catalyzes the hydrolysis of 1,4-dihydroxy-2-naphthoyl-CoA (DHNA-CoA) to 1,4-dihydroxy-2-naphthoate (DHNA). Also shows significant activity toward a wide range of acyl-CoA thioesters, and minimal activity toward benzoyl-holoEntB. The protein is 1,4-dihydroxy-2-naphthoyl-CoA hydrolase of Escherichia coli (strain K12).